A 161-amino-acid polypeptide reads, in one-letter code: Cyclic pyranopterin monophosphate synthase (161 aa).

Residues 78–80 and 116–117 each bind substrate; these read MCH and ME. D131 is an active-site residue.

It belongs to the MoaC family. In terms of assembly, homohexamer; trimer of dimers.

It carries out the reaction (8S)-3',8-cyclo-7,8-dihydroguanosine 5'-triphosphate = cyclic pyranopterin phosphate + diphosphate. Its pathway is cofactor biosynthesis; molybdopterin biosynthesis. In terms of biological role, catalyzes the conversion of (8S)-3',8-cyclo-7,8-dihydroguanosine 5'-triphosphate to cyclic pyranopterin monophosphate (cPMP). The chain is Cyclic pyranopterin monophosphate synthase from Nitratidesulfovibrio vulgaris (strain ATCC 29579 / DSM 644 / CCUG 34227 / NCIMB 8303 / VKM B-1760 / Hildenborough) (Desulfovibrio vulgaris).